The sequence spans 302 residues: Transmembrane protein 191C (302 aa).

Disordered regions lie at residues 1–21 (MAATQELLLQLQKDNRDGRQR) and 54–73 (LRRRSQAAQPLQGEAREAAR). Positions 5–160 (QELLLQLQKD…EKLQQDALQT (156 aa)) form a coiled coil. The helical transmembrane segment at 238-258 (VLGALQVLLTLPLLFLGLSLL) threads the bilayer.

This sequence belongs to the TMEM191 family.

Its subcellular location is the membrane. This is Transmembrane protein 191C from Homo sapiens (Human).